The following is a 498-amino-acid chain: Type VI secretion system sheath protein TssC1 (498 aa).

As to quaternary structure, forms a heterodimer with TssB1. Heterodimers assemble to form the sheath of the T6SS machinery. Interacts with TssA1.

In terms of biological role, core component of the H1 type VI (H1-T6SS) secretion system that plays a role in the release of toxins targeting both eukaryotic and prokaryotic species. Forms the sheath of the structure by assembling into tubules together with TssB1 resulting in the stacking of cogwheel-like structures showing predominantly a 12-fold symmetry. The sheath contracts to provide the energy needed for effector delivery. This is Type VI secretion system sheath protein TssC1 from Pseudomonas aeruginosa (strain ATCC 15692 / DSM 22644 / CIP 104116 / JCM 14847 / LMG 12228 / 1C / PRS 101 / PAO1).